The primary structure comprises 269 residues: Glutamate racemase (269 aa).

Residues 11–12 and 43–44 contribute to the substrate site; these read DS and YG. The active-site Proton donor/acceptor is Cys74. 75–76 contributes to the substrate binding site; it reads NT. Cys185 acts as the Proton donor/acceptor in catalysis. 186 to 187 contributes to the substrate binding site; sequence TH.

This sequence belongs to the aspartate/glutamate racemases family.

It catalyses the reaction L-glutamate = D-glutamate. The protein operates within cell wall biogenesis; peptidoglycan biosynthesis. Provides the (R)-glutamate required for cell wall biosynthesis. The chain is Glutamate racemase from Bacillus cereus (strain G9842).